The primary structure comprises 954 residues: MTQNFEMADRFTPSAVEQALYKHWEESGYFKPSEDTSKPSYSIAIPPPNVTGSLHMGHAFQQTLMDILIRFNRMEGHNTLWQTGTDHAGIATQMVVERKIAAEEGKTRHDYGREAFIDKIWDWKAYSGGTISQQMRRLGNSIDWERERFTMDEGLSDAVKEVFVRLHEEGLIYRGKRLVNWDPKLHTAISDLEVENKESKGSLWHFRYPLANGAKTADGKDYLVVATTRPETMLGDTAVAVHPEDERYQSLIGKTVVLPLANREIPIIADDYVDREFGTGVVKITPAHDFNDYEVGKRHQLPMVNVMTLNADIRAEAEIIGSDGKILESYTALIPTKYQGMERFAARKQIVADFEELGLLDEIKPHDLKVPYGDRGGVPIEPMLTDQWYVSVKPLAEVAVKAVEDGEIQFVPKQYENLYFSWMRDIQDWCISRQLWWGHRIPAWYDEQGNVYVARDEAEVRAKHNLPADLALKQDEDVLDTWFSSGLWTFSTLGWPKQTPDLKMFHSTDVLITGFDIIFFWVARMIMFTMHFVKDENGKPQVPFKTVYVTGLIRDEQGQKMSKSKGNVIDPLDMIDGIDLESLLEKRTGNMMQPQLAEKIAKATIKAFPEGIAEHGTDALRFTLTALATNGRDINWDMKRLEGYRNFCNKLWNASRFVLTNDKLDLSEGSVEYSVADRWIQSEFNRTVEAFRNALAQFRFDLCATALYEFTWNQFCDWYLELTKPVLVNGSVAQKRGASQTLINVLEKLLRLTHPVMPFITEEIWHKVKAFAGVSGDTIMLQAFPQFEQSALDYQAEAEINWMKEVIVAVRNIRAESNIPPSKGLDLLLRNLSEADQNALENNRTLIQAMAKLDAIRVLEAGEDAPLSVAKLVNNAELLVPMAGFINKEAELARLNKEIEKYQGEIQRIENKLANEAFVAKAPPAVIEKERAKMAEYAEGLNKLKQQYLAIEAL.

Residues 48–58 carry the 'HIGH' region motif; sequence PNVTGSLHMGH. Residues 560-564 carry the 'KMSKS' region motif; it reads KMSKS. An ATP-binding site is contributed by lysine 563. A coiled-coil region spans residues 883–953; it reads AGFINKEAEL…LKQQYLAIEA (71 aa).

The protein belongs to the class-I aminoacyl-tRNA synthetase family. ValS type 1 subfamily. Monomer.

The protein resides in the cytoplasm. The enzyme catalyses tRNA(Val) + L-valine + ATP = L-valyl-tRNA(Val) + AMP + diphosphate. Functionally, catalyzes the attachment of valine to tRNA(Val). As ValRS can inadvertently accommodate and process structurally similar amino acids such as threonine, to avoid such errors, it has a 'posttransfer' editing activity that hydrolyzes mischarged Thr-tRNA(Val) in a tRNA-dependent manner. The polypeptide is Valine--tRNA ligase (Pasteurella multocida (strain Pm70)).